A 151-amino-acid chain; its full sequence is Aspartate carbamoyltransferase regulatory chain (151 aa).

Positions 107, 112, 135, and 138 each coordinate Zn(2+).

This sequence belongs to the PyrI family. In terms of assembly, contains catalytic and regulatory chains. Requires Zn(2+) as cofactor.

In terms of biological role, involved in allosteric regulation of aspartate carbamoyltransferase. In Thermococcus onnurineus (strain NA1), this protein is Aspartate carbamoyltransferase regulatory chain.